The primary structure comprises 373 residues: Spermidine/putrescine import ATP-binding protein PotA (373 aa).

Positions Leu6–Val236 constitute an ABC transporter domain. Gly38–Thr45 serves as a coordination point for ATP.

The protein belongs to the ABC transporter superfamily. Spermidine/putrescine importer (TC 3.A.1.11.1) family. As to quaternary structure, the complex is composed of two ATP-binding proteins (PotA), two transmembrane proteins (PotB and PotC) and a solute-binding protein (PotD).

The protein localises to the cell inner membrane. It carries out the reaction ATP + H2O + polyamine-[polyamine-binding protein]Side 1 = ADP + phosphate + polyamineSide 2 + [polyamine-binding protein]Side 1.. In terms of biological role, part of the ABC transporter complex PotABCD involved in spermidine/putrescine import. Responsible for energy coupling to the transport system. The protein is Spermidine/putrescine import ATP-binding protein PotA of Marinobacter nauticus (strain ATCC 700491 / DSM 11845 / VT8) (Marinobacter aquaeolei).